The chain runs to 748 residues: Phosphoenolpyruvate-dependent phosphotransferase system (748 aa).

The GAF domain maps to 1 to 127 (MLTRLREIVE…RRQLLGVLVV (127 aa)). The interval 128-170 (QQRELRQYDESEESFLVTLATQMAAILSQSQLTALFGQYRQTR) is linker. The segment at 171-748 (IRALPAAPGV…GMGGLIRGGL (578 aa)) is PTS EI. His356 functions as the Tele-phosphohistidine intermediate in the catalytic mechanism. Phosphoenolpyruvate-binding residues include Arg462 and Arg498. Residues Glu597 and Asp621 each coordinate Mg(2+). Phosphoenolpyruvate-binding positions include 620 to 621 (ND) and Arg631. Cys668 serves as the catalytic Proton donor.

This sequence belongs to the PEP-utilizing enzyme family. Mg(2+) serves as cofactor.

The protein resides in the cytoplasm. The enzyme catalyses L-histidyl-[protein] + phosphoenolpyruvate = N(pros)-phospho-L-histidyl-[protein] + pyruvate. Its activity is regulated as follows. Inhibited by GDP and FAD. Component of the phosphoenolpyruvate-dependent nitrogen-metabolic phosphotransferase system (nitrogen-metabolic PTS), that seems to be involved in regulating nitrogen metabolism. Enzyme I-Ntr transfers the phosphoryl group from phosphoenolpyruvate (PEP) to the phosphoryl carrier protein (NPr). Could function in the transcriptional regulation of sigma-54 dependent operons in conjunction with the NPr (PtsO) and EIIA-Ntr (PtsN) proteins. Enzyme I-Ntr is specific for NPr. The polypeptide is Phosphoenolpyruvate-dependent phosphotransferase system (ptsP) (Escherichia coli (strain K12)).